Consider the following 433-residue polypeptide: Type I acyl-CoA thioesterase mpaH' (433 aa).

The segment at 58 to 246 (HGVGLPKELY…IKALFGTTAD (189 aa)) is abhydrolase domain. Residue Val60 coordinates substrate. Residue Ser139 is the Nucleophile of the active site. Phe140 contributes to the substrate binding site. Residues Asp163 and His365 contribute to the active site.

The protein belongs to the AB hydrolase superfamily. MpaH hydrolase family. Homodimer.

The protein resides in the peroxisome matrix. It catalyses the reaction mycophenolyl-CoA + H2O = mycophenolate + CoA + H(+). It functions in the pathway secondary metabolite biosynthesis; terpenoid biosynthesis. Its function is as follows. Type I acyl-CoA thioesterase; part of the gene cluster that mediates the biosynthesis of mycophenolic acid (MPA), the first isolated antibiotic natural product in the world obtained from a culture of Penicillium brevicompactum in 1893. MpaH' acts as a peroxisomal acyl-CoA hydrolase that converts MPA-CoA into the final product MPA. The first step of the pathway is the synthesis of 5-methylorsellinic acid (5MOA) by the cytosolic polyketide synthase mpaC. 5MOA is then converted to the phthalide compound 5,7-dihydroxy-4,6-dimethylphthalide (DHMP) by the endoplasmic reticulum-bound cytochrome P450 monooxygenase mpaDE. MpaDE first catalyzes hydroxylation of 5-MOA to 4,6-dihydroxy-2-(hydroxymethyl)-3-methylbenzoic acid (DHMB). MpaDE then acts as a lactone synthase that catalyzes the ring closure to convert DHMB into DHMP. The next step is the prenylation of DHMP by the Golgi apparatus-associated prenyltransferase mpaA to yield farnesyl-DHMP (FDHMP). The ER-bound oxygenase mpaB then mediates the oxidative cleavage the C19-C20 double bond in FDHMP to yield FDHMP-3C via a mycophenolic aldehyde intermediate. The O-methyltransferase mpaG catalyzes the methylation of FDHMP-3C to yield MFDHMP-3C. After the cytosolic methylation of FDHMP-3C, MFDHMP-3C enters into peroxisomes probably via free diffusion due to its low molecular weight. Upon a peroxisomal CoA ligation reaction, catalyzed by a beta-oxidation component enzyme acyl-CoA ligase ACL891, MFDHMP-3C-CoA would then be restricted to peroxisomes for the following beta-oxidation pathway steps. The peroxisomal beta-oxidation machinery than converts MFDHMP-3C-CoA into MPA_CoA, via a beta-oxidation chain-shortening process. Finally mpaH acts as a peroxisomal acyl-CoA hydrolase with high substrate specificity toward MPA-CoA to release the final product MPA. The chain is Type I acyl-CoA thioesterase mpaH' from Penicillium brevicompactum.